The chain runs to 313 residues: Probable 5-dehydro-4-deoxyglucarate dehydratase 1 (313 aa).

This sequence belongs to the DapA family.

The catalysed reaction is 5-dehydro-4-deoxy-D-glucarate + H(+) = 2,5-dioxopentanoate + CO2 + H2O. It functions in the pathway carbohydrate acid metabolism; D-glucarate degradation; 2,5-dioxopentanoate from D-glucarate: step 2/2. This Streptomyces avermitilis (strain ATCC 31267 / DSM 46492 / JCM 5070 / NBRC 14893 / NCIMB 12804 / NRRL 8165 / MA-4680) protein is Probable 5-dehydro-4-deoxyglucarate dehydratase 1.